The primary structure comprises 293 residues: tRNA pseudouridine synthase B (293 aa).

The active-site Nucleophile is the D39.

It belongs to the pseudouridine synthase TruB family. Type 1 subfamily.

It catalyses the reaction uridine(55) in tRNA = pseudouridine(55) in tRNA. Functionally, responsible for synthesis of pseudouridine from uracil-55 in the psi GC loop of transfer RNAs. This Thermobifida fusca (strain YX) protein is tRNA pseudouridine synthase B.